A 953-amino-acid chain; its full sequence is Xylosyltransferase 1 (953 aa).

Residues 1–17 are Cytoplasmic-facing; it reads MVAAPCARRLARRSHSA. Residues 18-38 form a helical; Signal-anchor for type II membrane protein membrane-spanning segment; the sequence is LLAALMVLLLHTLVVWNFSSL. Residues 39-953 lie on the Lumenal side of the membrane; it reads DSGAGEQRRA…GAVKPDGRLR (915 aa). Residues 48–62 are compositionally biased toward low complexity; the sequence is AGAAAGAAEQQQPAA. Disordered regions lie at residues 48-67 and 74-251; these read AGAA…RRER and LPAA…APKC. Residues 79–97 are compositionally biased toward gly residues; that stretch reads GGPGGRAGGGGARGGGPGG. The span at 138-154 shows a compositional bias: basic and acidic residues; sequence KVRTDSNNENSVPKDFE. The segment covering 156–165 has biased composition (polar residues); that stretch reads VDNSNFAPRT. Composition is skewed to basic and acidic residues over residues 170-197 and 205-216; these read HQPE…DKRQ and GPKEVLPPREKA. N-linked (GlcNAc...) asparagine glycosylation is present at N219. 4 cysteine pairs are disulfide-bonded: C251–C279, C295–C536, C555–C568, and C557–C566. Residues V327, D355, and 384–386 each bind UDP-alpha-D-xylose; that span reads TIW. Residue N415 is glycosylated (N-linked (GlcNAc...) asparagine). 488 to 489 serves as a coordination point for UDP-alpha-D-xylose; the sequence is DW. UDP-alpha-D-xylose is bound by residues S569 and 592–593; that span reads RK. 2 disulfide bridges follow: C669–C921 and C914–C927. Residue N771 is glycosylated (N-linked (GlcNAc...) asparagine). The interval 933–953 is disordered; sequence SSFSPDPKSELGAVKPDGRLR.

Belongs to the glycosyltransferase 14 family. XylT subfamily. In terms of assembly, monomer. A divalent metal cation is required as a cofactor. Post-translationally, contains 7 disulfide bonds. In terms of processing, N-glycosylated. As to expression, detected in brain, spleen, kidney and testis, and at low levels in skeletal muscle.

It localises to the golgi apparatus membrane. The enzyme catalyses UDP-alpha-D-xylose + L-seryl-[protein] = 3-O-(beta-D-xylosyl)-L-seryl-[protein] + UDP + H(+). The protein operates within glycan metabolism; chondroitin sulfate biosynthesis. It participates in glycan metabolism; heparan sulfate biosynthesis. Catalyzes the first step in the biosynthesis of chondroitin sulfate and dermatan sulfate proteoglycans, such as DCN. Transfers D-xylose from UDP-D-xylose to specific serine residues of the core protein. Required for normal maturation of chondrocytes during bone development, normal onset of ossification and normal embryonic and postnatal skeleton development, especially of the long bones. In Mus musculus (Mouse), this protein is Xylosyltransferase 1 (Xylt1).